Consider the following 403-residue polypeptide: Na(+)-translocating NADH-quinone reductase subunit B (403 aa).

A run of 9 helical transmembrane segments spans residues 56 to 76, 121 to 141, 163 to 183, 220 to 240, 258 to 278, 287 to 307, 312 to 332, 348 to 368, and 371 to 391; these read MMITVWLCTFPAMFFGMWNTG, AYFLPIYAVTFIVGGFWEVLF, ILPPTIPLWQVALGISFGVVI, WTAVDGYAGATALSLGFAGGI, IHGSIGETSTLAIFIGGAVLI, IVTGVMLGMIALSTLFNLIGS, LFGMPWYWHMVVGGFAFGMIF, WVFGILIGVMVVLIRVVNPAF, and GMMLAILFANLCAPLIDHFVI. Position 230 is an FMN phosphoryl threonine (Thr230).

Belongs to the NqrB/RnfD family. In terms of assembly, composed of six subunits; NqrA, NqrB, NqrC, NqrD, NqrE and NqrF. Requires FMN as cofactor.

It localises to the cell inner membrane. It carries out the reaction a ubiquinone + n Na(+)(in) + NADH + H(+) = a ubiquinol + n Na(+)(out) + NAD(+). Its function is as follows. NQR complex catalyzes the reduction of ubiquinone-1 to ubiquinol by two successive reactions, coupled with the transport of Na(+) ions from the cytoplasm to the periplasm. NqrA to NqrE are probably involved in the second step, the conversion of ubisemiquinone to ubiquinol. The polypeptide is Na(+)-translocating NADH-quinone reductase subunit B (Stutzerimonas stutzeri (strain A1501) (Pseudomonas stutzeri)).